The sequence spans 303 residues: Aspartate carbamoyltransferase catalytic subunit (303 aa).

2 residues coordinate carbamoyl phosphate: R51 and T52. K80 is a binding site for L-aspartate. Carbamoyl phosphate is bound by residues R101, H129, and Q132. L-aspartate-binding residues include R162 and R221. 2 residues coordinate carbamoyl phosphate: L260 and P261.

The protein belongs to the aspartate/ornithine carbamoyltransferase superfamily. ATCase family. In terms of assembly, heterooligomer of catalytic and regulatory chains.

It catalyses the reaction carbamoyl phosphate + L-aspartate = N-carbamoyl-L-aspartate + phosphate + H(+). Its pathway is pyrimidine metabolism; UMP biosynthesis via de novo pathway; (S)-dihydroorotate from bicarbonate: step 2/3. In terms of biological role, catalyzes the condensation of carbamoyl phosphate and aspartate to form carbamoyl aspartate and inorganic phosphate, the committed step in the de novo pyrimidine nucleotide biosynthesis pathway. The polypeptide is Aspartate carbamoyltransferase catalytic subunit (Saccharolobus islandicus (strain M.16.4 / Kamchatka #3) (Sulfolobus islandicus)).